We begin with the raw amino-acid sequence, 583 residues long: Epsin-2 (583 aa).

Positions 8, 11, 25, 30, 63, and 73 each coordinate a 1,2-diacyl-sn-glycero-3-phospho-(1D-myo-inositol-4,5-bisphosphate). The region spanning 12–144 (NIVNSYSEAE…KDEERLKVER (133 aa)) is the ENTH domain. Polar residues predominate over residues 165–181 (QITFGRGSSQPNLSISH). Residues 165 to 217 (QITFGRGSSQPNLSISHSEQEYGKAGGSPASYHGSTSPRVSSELEQARPQTSG) are disordered. Arg-170 is modified (omega-N-methylarginine). 3 positions are modified to phosphoserine: Ser-173, Ser-192, and Ser-195. Over residues 197 to 216 (HGSTSPRVSSELEQARPQTS) the composition is skewed to polar residues. 2 UIM domains span residues 218 to 237 (EEEL…AEQE) and 243 to 262 (GDDL…TVKV). Disordered regions lie at residues 293–384 (SGPV…KPSP) and 411–457 (TSKK…PESF). Tandem repeats lie at residues 301 to 303 (EPW), 313 to 315 (NPW), 326 to 328 (DPW), and 340 to 342 (DPW). The span at 301-315 (EPWSTGTPANQTNPW) shows a compositional bias: polar residues. The segment at 301 to 377 (EPWSTGTPAN…SDAGKTADAW (77 aa)) is 6 X 3 AA repeats of [DE]-P-W. Residues 346–355 (TTASIQSVPK) show a composition bias toward polar residues. Repeat copies occupy residues 358 to 360 (DPW) and 375 to 377 (DAW). Ser-431 carries the post-translational modification Phosphoserine. Residues 437–448 (SQSLTSASSKPS) show a composition bias toward low complexity. A Phosphothreonine modification is found at Thr-453. 2 consecutive repeat copies span residues 482 to 484 (NPF) and 496 to 498 (NPF). Residues 482 to 581 (NPFLAPGAAA…AQPAGTTNPF (100 aa)) are 3 X 3 AA repeats of N-P-F. Ser-514 carries the phosphoserine modification. Copy 3 of the repeat occupies 579-581 (NPF).

Belongs to the epsin family. As to quaternary structure, binds AP-2 and clathrin. Interacts with ITSN1. Interacts with UBQLN2. Binds EPS15. In terms of processing, ubiquitinated. In terms of tissue distribution, highly expressed in brain. Detected at lower levels in lung, liver, muscle and testis.

It localises to the cytoplasm. Functionally, plays a role in the formation of clathrin-coated invaginations and endocytosis. This Rattus norvegicus (Rat) protein is Epsin-2 (Epn2).